Reading from the N-terminus, the 491-residue chain is Arginine decarboxylase (491 aa).

Lysine 227 bears the N6-(pyridoxal phosphate)lysine mark.

The protein belongs to the Orn/Lys/Arg decarboxylase class-I family. It depends on pyridoxal 5'-phosphate as a cofactor.

It localises to the cytoplasm. The catalysed reaction is L-arginine + H(+) = agmatine + CO2. Its pathway is amine and polyamine biosynthesis; agmatine biosynthesis; agmatine from L-arginine: step 1/1. Its function is as follows. Catalyzes the formation of agmatine from arginine. The sequence is that of Arginine decarboxylase (speA) from Halalkalibacterium halodurans (strain ATCC BAA-125 / DSM 18197 / FERM 7344 / JCM 9153 / C-125) (Bacillus halodurans).